A 524-amino-acid chain; its full sequence is Phosphoenolpyruvate carboxykinase (ATP) (524 aa).

Positions 52, 188, and 194 each coordinate substrate. Residues lysine 194, histidine 213, and 229–237 contribute to the ATP site; that span reads GLSGTGKTT. Mn(2+)-binding residues include lysine 194 and histidine 213. A Mn(2+)-binding site is contributed by aspartate 250. Positions 278, 314, and 439 each coordinate ATP. Arginine 314 contacts substrate.

Belongs to the phosphoenolpyruvate carboxykinase (ATP) family. It depends on Mn(2+) as a cofactor.

It is found in the cytoplasm. The catalysed reaction is oxaloacetate + ATP = phosphoenolpyruvate + ADP + CO2. It functions in the pathway carbohydrate biosynthesis; gluconeogenesis. Its function is as follows. Involved in the gluconeogenesis. Catalyzes the conversion of oxaloacetate (OAA) to phosphoenolpyruvate (PEP) through direct phosphoryl transfer between the nucleoside triphosphate and OAA. The chain is Phosphoenolpyruvate carboxykinase (ATP) from Campylobacter jejuni subsp. doylei (strain ATCC BAA-1458 / RM4099 / 269.97).